The sequence spans 225 residues: UPF0502 protein Ajs_3392 (225 aa).

It belongs to the UPF0502 family.

The polypeptide is UPF0502 protein Ajs_3392 (Acidovorax sp. (strain JS42)).